Reading from the N-terminus, the 69-residue chain is uncharacterized protein (69 aa).

Disordered stretches follow at residues 1–32 and 44–69; these read MSAP…GWGD and QSDA…APSD. 2 stretches are compositionally biased toward basic and acidic residues: residues 7–32 and 46–69; these read NLDR…GWGD and DADK…APSD.

This is an uncharacterized protein from Schizosaccharomyces pombe (strain 972 / ATCC 24843) (Fission yeast).